The primary structure comprises 380 residues: MLRAVARCCGHWPPGAAAADGMLWQTELRPHAAGEFSMAAAQANLAMEDQAQVLASPAATLVGVYDGHGGADASRFLRSRLFPHVQRFEKEQGGMSTEVIRRAFGAAEEEFLQQVRQAWRQRPKMAAVGSCCLLGAISGDTLYVANLGDSRAVLGRRVVGGGVAVAERLTDEHNAASEEVRRELTALNPDDAQIVVHARGAWRVKGIIQVSRTIGDVYLKKQEYSMDPVFRNVGPPIPLKRPALSAEPSIQVRKLKPNDLFLIFASDGLWEHLSDDAAVQIVFKNPRTGIANRLVKAALKEATRKREVSFRDLKTIEKGVRRHFHDDISVIVVYLDRHRGRRHTRVVDSSSNCTNAPVDIYSSNSGQSVETLQAHRGSGW.

A PPM-type phosphatase domain is found at 32 to 335; the sequence is AAGEFSMAAA…DDISVIVVYL (304 aa). Positions 66, 67, 267, and 326 each coordinate Mn(2+).

The protein belongs to the PP2C family. Mg(2+) is required as a cofactor. The cofactor is Mn(2+).

It catalyses the reaction O-phospho-L-seryl-[protein] + H2O = L-seryl-[protein] + phosphate. The catalysed reaction is O-phospho-L-threonyl-[protein] + H2O = L-threonyl-[protein] + phosphate. This Oryza sativa subsp. indica (Rice) protein is Probable protein phosphatase 2C 34 (BIPP2C2).